A 317-amino-acid chain; its full sequence is Transaldolase (317 aa).

Catalysis depends on Lys-126, which acts as the Schiff-base intermediate with substrate.

It belongs to the transaldolase family. Type 1 subfamily. In terms of assembly, homodimer.

Its subcellular location is the cytoplasm. It carries out the reaction D-sedoheptulose 7-phosphate + D-glyceraldehyde 3-phosphate = D-erythrose 4-phosphate + beta-D-fructose 6-phosphate. It functions in the pathway carbohydrate degradation; pentose phosphate pathway; D-glyceraldehyde 3-phosphate and beta-D-fructose 6-phosphate from D-ribose 5-phosphate and D-xylulose 5-phosphate (non-oxidative stage): step 2/3. Its function is as follows. Transaldolase is important for the balance of metabolites in the pentose-phosphate pathway. This Burkholderia pseudomallei (strain K96243) protein is Transaldolase.